A 326-amino-acid polypeptide reads, in one-letter code: Glutaminase 2 (326 aa).

7 residues coordinate substrate: Ser73, Asn125, Glu169, Asn176, Tyr200, Tyr252, and Val270.

The protein belongs to the glutaminase family. As to quaternary structure, homotetramer.

The catalysed reaction is L-glutamine + H2O = L-glutamate + NH4(+). The chain is Glutaminase 2 from Bacillus cereus (strain ATCC 14579 / DSM 31 / CCUG 7414 / JCM 2152 / NBRC 15305 / NCIMB 9373 / NCTC 2599 / NRRL B-3711).